The sequence spans 46 residues: Mu-segestritoxin-Sf1f (46 aa).

Disulfide bonds link Cys3–Cys19, Cys10–Cys22, Cys18–Cys42, and Cys24–Cys40. The keys region for toxin activity stretch occupies residues 31–33; it reads RPW.

Belongs to the neurotoxin 16 (SFI) family. As to expression, expressed by the venom gland.

It is found in the secreted. Insecticidal toxin. It inhibits insect voltage-gated sodium channels (Nav) by partially blocking the channel pore in DUM neurons from the American cockroach, not by acting as a gating modifier. The inhibition is only partially reversible after prolonged washout. In vivo, the toxin causes flaccid paralysis followed by death when injected into Heliothis virescens larvae. It also causes uncoordinated movements followed by full paralysis to sheep blowflies (Lucilia cuprina). When the toxin is fused to snowdrop lectin, it is orally active against larvae of the tomato moth (Laconobia oleracea), the rice brown planthopper (Nilaparvata lugens), and the peach-potato aphid (Myzus persicae). The protein is Mu-segestritoxin-Sf1f of Segestria florentina (Tube-web spider).